Reading from the N-terminus, the 257-residue chain is UPF0246 protein Daro_2893 (257 aa).

It belongs to the UPF0246 family.

This Dechloromonas aromatica (strain RCB) protein is UPF0246 protein Daro_2893.